We begin with the raw amino-acid sequence, 282 residues long: 3-methyl-2-oxobutanoate hydroxymethyltransferase (282 aa).

Asp44 and Asp83 together coordinate Mg(2+). Residues Asp44–Ser45, Asp83, and Lys112 each bind 3-methyl-2-oxobutanoate. Glu114 is a Mg(2+) binding site. Glu181 functions as the Proton acceptor in the catalytic mechanism.

The protein belongs to the PanB family. In terms of assembly, homodecamer; pentamer of dimers. Mg(2+) is required as a cofactor.

Its subcellular location is the cytoplasm. It catalyses the reaction 3-methyl-2-oxobutanoate + (6R)-5,10-methylene-5,6,7,8-tetrahydrofolate + H2O = 2-dehydropantoate + (6S)-5,6,7,8-tetrahydrofolate. It functions in the pathway cofactor biosynthesis; coenzyme A biosynthesis. Catalyzes the reversible reaction in which hydroxymethyl group from 5,10-methylenetetrahydrofolate is transferred onto alpha-ketoisovalerate to form ketopantoate. The sequence is that of 3-methyl-2-oxobutanoate hydroxymethyltransferase from Pyrococcus abyssi (strain GE5 / Orsay).